We begin with the raw amino-acid sequence, 113 residues long: Dolichyl-diphosphooligosaccharide--protein glycosyltransferase subunit dad-1 (113 aa).

Topologically, residues 1-32 are cytoplasmic; the sequence is MAAQVVPVLSKLFDDYQKTTSSKLKIIDAYMT. A helical membrane pass occupies residues 33 to 53; that stretch reads YILFTGIFQFIYCLLVGTFPF. The Lumenal portion of the chain corresponds to 54-55; it reads NS. The helical transmembrane segment at 56–78 threads the bilayer; it reads FLSGFISTVTSFVLASCLRMQVN. Residues 79–92 lie on the Cytoplasmic side of the membrane; sequence QENRSEFTAVSTER. The chain crosses the membrane as a helical span at residues 93–113; sequence AFADFIFANLILHLVVVNFLG.

The protein belongs to the DAD/OST2 family. As to quaternary structure, component of the oligosaccharyltransferase (OST) complex.

The protein resides in the endoplasmic reticulum membrane. It participates in protein modification; protein glycosylation. Its function is as follows. Subunit of the oligosaccharyl transferase (OST) complex that catalyzes the initial transfer of a defined glycan (Glc(3)Man(9)GlcNAc(2) in eukaryotes) from the lipid carrier dolichol-pyrophosphate to an asparagine residue within an Asn-X-Ser/Thr consensus motif in nascent polypeptide chains, the first step in protein N-glycosylation. N-glycosylation occurs cotranslationally and the complex associates with the Sec61 complex at the channel-forming translocon complex that mediates protein translocation across the endoplasmic reticulum (ER). All subunits are required for a maximal enzyme activity. Possesses cell death-inhibiting activity. Suppresses some programmed cell death in C.elegans. This is Dolichyl-diphosphooligosaccharide--protein glycosyltransferase subunit dad-1 from Caenorhabditis elegans.